The following is a 462-amino-acid chain: Serine--tRNA ligase, cytoplasmic (462 aa).

Lys241 participates in a covalent cross-link: Glycyl lysine isopeptide (Lys-Gly) (interchain with G-Cter in URM1). L-serine is bound at residue 246–248 (TSE). Residues 279–281 (RRE) and Val295 contribute to the ATP site. An L-serine-binding site is contributed by Glu302. Residues Lys350 and Lys351 each participate in a glycyl lysine isopeptide (Lys-Gly) (interchain with G-Cter in URM1) cross-link. 366-369 (ELVS) lines the ATP pocket. Residues Cys373 and Cys400 each carry the cysteine persulfide modification. An L-serine-binding site is contributed by Thr404.

This sequence belongs to the class-II aminoacyl-tRNA synthetase family. Type-1 seryl-tRNA synthetase subfamily. Homodimer; the tRNA molecule probably binds across the dimer. Interacts with ABP140; interaction is required for the tRNA N(3)-methylcytidine methyltransferase activity of ABP140. Post-translationally, conjugated to URM1, a ubiquitin-like protein, in response to oxidative stresses. The attachment of URM1 to lysine residues exclusively depends on the presence of a peroxidatic cysteine in the target protein, with low specificity for the particular residue, motif, or structural context at which urmylation can occur. The URM1-conjugation reaction is mechanistically and directly coupled to the process of cysteine persulfidation, transfering the sulfur atom of the URM1 thiocarboxyl group to redox-active cysteine residues in the target protein if it is exposed to oxidative conditions. Persulfidated on specific redox-active cysteine residues. Persulfidation (also called protein S-sulfhydration) may provide a molecular mechanism that enables cells to protect vulnerable cysteine residues from reactive oxygen species (ROS) under stress conditions.

It localises to the cytoplasm. The protein resides in the cytosol. The enzyme catalyses tRNA(Ser) + L-serine + ATP = L-seryl-tRNA(Ser) + AMP + diphosphate + H(+). Functionally, catalyzes the attachment of serine to tRNA(Ser) in a two-step reaction: serine is first activated by ATP to form Ser-AMP and then transferred to the acceptor end of tRNA(Ser). The protein is Serine--tRNA ligase, cytoplasmic (SES1) of Saccharomyces cerevisiae (strain ATCC 204508 / S288c) (Baker's yeast).